We begin with the raw amino-acid sequence, 303 residues long: ATP-dependent Clp protease ATP-binding subunit CLPT3, chloroplastic (303 aa).

A chloroplast-targeting transit peptide spans M1 to A37. 2 disordered regions span residues A185–D214 and R278–E303.

This sequence belongs to the ClpA/ClpB family.

Its subcellular location is the plastid. It localises to the chloroplast. Functionally, accessory protein regulating the assembly of the plastid Clp protease system. This chain is ATP-dependent Clp protease ATP-binding subunit CLPT3, chloroplastic, found in Chlamydomonas reinhardtii (Chlamydomonas smithii).